The chain runs to 377 residues: Phospho-N-acetylmuramoyl-pentapeptide-transferase (377 aa).

11 consecutive transmembrane segments (helical) span residues 9–29 (YITL…LVAG), 62–82 (MGGA…ADWI), 85–105 (FVWV…MDDY), 122–142 (FFWQ…AVSA), 155–175 (WVGS…VPFF), 178–198 (VSYP…IVGT), 210–230 (GLAI…AYVV), 247–267 (AAEL…FLWF), 274–294 (VFMG…IAVI), 299–319 (IVLF…MVQV), and 354–374 (QVVV…LSTL).

The protein belongs to the glycosyltransferase 4 family. MraY subfamily. The cofactor is Mg(2+).

It localises to the cell inner membrane. The enzyme catalyses UDP-N-acetyl-alpha-D-muramoyl-L-alanyl-gamma-D-glutamyl-meso-2,6-diaminopimeloyl-D-alanyl-D-alanine + di-trans,octa-cis-undecaprenyl phosphate = di-trans,octa-cis-undecaprenyl diphospho-N-acetyl-alpha-D-muramoyl-L-alanyl-D-glutamyl-meso-2,6-diaminopimeloyl-D-alanyl-D-alanine + UMP. It participates in cell wall biogenesis; peptidoglycan biosynthesis. Catalyzes the initial step of the lipid cycle reactions in the biosynthesis of the cell wall peptidoglycan: transfers peptidoglycan precursor phospho-MurNAc-pentapeptide from UDP-MurNAc-pentapeptide onto the lipid carrier undecaprenyl phosphate, yielding undecaprenyl-pyrophosphoryl-MurNAc-pentapeptide, known as lipid I. This is Phospho-N-acetylmuramoyl-pentapeptide-transferase from Bordetella parapertussis (strain 12822 / ATCC BAA-587 / NCTC 13253).